We begin with the raw amino-acid sequence, 445 residues long: Phosphoglucosamine mutase (445 aa).

The active-site Phosphoserine intermediate is the S99. 4 residues coordinate Mg(2+): S99, D242, D244, and D246. The residue at position 99 (S99) is a Phosphoserine.

Belongs to the phosphohexose mutase family. Mg(2+) is required as a cofactor. Post-translationally, activated by phosphorylation.

The enzyme catalyses alpha-D-glucosamine 1-phosphate = D-glucosamine 6-phosphate. Functionally, catalyzes the conversion of glucosamine-6-phosphate to glucosamine-1-phosphate. This is Phosphoglucosamine mutase from Campylobacter lari (strain RM2100 / D67 / ATCC BAA-1060).